Here is a 684-residue protein sequence, read N- to C-terminus: DNA ligase (684 aa).

Residues 48-52 (DYEYD), 97-98 (SL), and glutamate 129 each bind NAD(+). The active-site N6-AMP-lysine intermediate is the lysine 131. NAD(+) is bound by residues arginine 152, glutamate 189, lysine 310, and lysine 334. Zn(2+)-binding residues include cysteine 429, cysteine 432, cysteine 447, and cysteine 452. Residues 609 to 684 (AQEGSLSGMS…ISWEELQAMI (76 aa)) enclose the BRCT domain.

This sequence belongs to the NAD-dependent DNA ligase family. LigA subfamily. Mg(2+) serves as cofactor. Mn(2+) is required as a cofactor.

It catalyses the reaction NAD(+) + (deoxyribonucleotide)n-3'-hydroxyl + 5'-phospho-(deoxyribonucleotide)m = (deoxyribonucleotide)n+m + AMP + beta-nicotinamide D-nucleotide.. DNA ligase that catalyzes the formation of phosphodiester linkages between 5'-phosphoryl and 3'-hydroxyl groups in double-stranded DNA using NAD as a coenzyme and as the energy source for the reaction. It is essential for DNA replication and repair of damaged DNA. In Bdellovibrio bacteriovorus (strain ATCC 15356 / DSM 50701 / NCIMB 9529 / HD100), this protein is DNA ligase.